Consider the following 105-residue polypeptide: Pyrimidine/purine nucleoside phosphorylase (105 aa).

The protein belongs to the nucleoside phosphorylase PpnP family.

It catalyses the reaction a purine D-ribonucleoside + phosphate = a purine nucleobase + alpha-D-ribose 1-phosphate. The enzyme catalyses adenosine + phosphate = alpha-D-ribose 1-phosphate + adenine. It carries out the reaction cytidine + phosphate = cytosine + alpha-D-ribose 1-phosphate. The catalysed reaction is guanosine + phosphate = alpha-D-ribose 1-phosphate + guanine. It catalyses the reaction inosine + phosphate = alpha-D-ribose 1-phosphate + hypoxanthine. The enzyme catalyses thymidine + phosphate = 2-deoxy-alpha-D-ribose 1-phosphate + thymine. It carries out the reaction uridine + phosphate = alpha-D-ribose 1-phosphate + uracil. The catalysed reaction is xanthosine + phosphate = alpha-D-ribose 1-phosphate + xanthine. Functionally, catalyzes the phosphorolysis of diverse nucleosides, yielding D-ribose 1-phosphate and the respective free bases. Can use uridine, adenosine, guanosine, cytidine, thymidine, inosine and xanthosine as substrates. Also catalyzes the reverse reactions. The protein is Pyrimidine/purine nucleoside phosphorylase of Clostridioides difficile (strain 630) (Peptoclostridium difficile).